The primary structure comprises 333 residues: Adenosine deaminase (333 aa).

The Zn(2+) site is built by His12 and His14. 3 residues coordinate substrate: His14, Asp16, and Gly170. Residue His197 coordinates Zn(2+). Glu200 functions as the Proton donor in the catalytic mechanism. Asp278 is a binding site for Zn(2+). Asp279 provides a ligand contact to substrate.

It belongs to the metallo-dependent hydrolases superfamily. Adenosine and AMP deaminases family. Adenosine deaminase subfamily. It depends on Zn(2+) as a cofactor.

It carries out the reaction adenosine + H2O + H(+) = inosine + NH4(+). The catalysed reaction is 2'-deoxyadenosine + H2O + H(+) = 2'-deoxyinosine + NH4(+). Its function is as follows. Catalyzes the hydrolytic deamination of adenosine and 2-deoxyadenosine. This Shigella boydii serotype 4 (strain Sb227) protein is Adenosine deaminase.